The chain runs to 359 residues: 3-isopropylmalate dehydrogenase (359 aa).

Residue 76 to 89 coordinates NAD(+); it reads GPKWDDPSAKTRPE. Positions 96, 106, 134, and 223 each coordinate substrate. The Mg(2+) site is built by Asp223, Asp247, and Asp251. 281 to 293 lines the NAD(+) pocket; it reads GSAPDIAGKSVAN.

Belongs to the isocitrate and isopropylmalate dehydrogenases family. LeuB type 1 subfamily. Homodimer. Requires Mg(2+) as cofactor. Mn(2+) serves as cofactor.

It is found in the cytoplasm. The catalysed reaction is (2R,3S)-3-isopropylmalate + NAD(+) = 4-methyl-2-oxopentanoate + CO2 + NADH. It functions in the pathway amino-acid biosynthesis; L-leucine biosynthesis; L-leucine from 3-methyl-2-oxobutanoate: step 3/4. Functionally, catalyzes the oxidation of 3-carboxy-2-hydroxy-4-methylpentanoate (3-isopropylmalate) to 3-carboxy-4-methyl-2-oxopentanoate. The product decarboxylates to 4-methyl-2 oxopentanoate. The polypeptide is 3-isopropylmalate dehydrogenase (Rhodopirellula baltica (strain DSM 10527 / NCIMB 13988 / SH1)).